Reading from the N-terminus, the 658-residue chain is Probable mitochondrial Rho GTPase gemA (658 aa).

Topologically, residues 1 to 633 (MKNNIKVILI…NGSNGSNNSN (633 aa)) are cytoplasmic. The Miro 1 domain occupies 2–175 (KNNIKVILIG…LYASQTSVFF (174 aa)). Residues 11–18 (GDEQVGKS), 57–62 (DTFDDG), and 118–121 (NKLD) contribute to the GTP site. EF-hand domains follow at residues 191 to 226 (GCER…CGHE) and 311 to 346 (MGNE…TPKI). Residues Asp-204, Asp-206, Asp-208, Ser-210, Glu-215, Asp-324, Asp-326, Asp-328, and Asp-335 each coordinate Ca(2+). The Miro 2 domain maps to 420 to 616 (RNIVNCYVFG…YHEMMETIVN (197 aa)). GTP is bound by residues 429–436 (GAEAVGKT), 466–468 (LLK), and 530–533 (TKNN). Residues 532 to 575 (NNNNNNNNNNNNNNNNNNNNLNNNNNNINNNNNNNNNNTTTTNA) are disordered. A helical; Anchor for type IV membrane protein membrane pass occupies residues 634–656 (ILTYLVIAAGVAGVGLLLSKYLA). Residues 657–658 (KK) are Mitochondrial intermembrane-facing.

Belongs to the mitochondrial Rho GTPase family.

The protein localises to the mitochondrion outer membrane. Mitochondrial GTPase involved in mitochondrial trafficking. Probably involved in control of anterograde transport of mitochondria and their subcellular distribution. The protein is Probable mitochondrial Rho GTPase gemA (gemA) of Dictyostelium discoideum (Social amoeba).